A 239-amino-acid polypeptide reads, in one-letter code: Prolyl hydroxylase EGLN3 (239 aa).

The beta(2)beta(3) 'finger-like' loop stretch occupies residues 62–73 (AGPRAGVSKRHL). Residues 88–104 (CEAISFLLSLIDRLVLY) are required for interaction with ADRB2. Positions 116–214 (ERSKAMVACY…RYAMTVWYFD (99 aa)) constitute a Fe2OG dioxygenase domain. The Fe cation site is built by His-135, Asp-137, and His-196. Arg-205 provides a ligand contact to 2-oxoglutarate.

As to quaternary structure, interacts with BCL2 (via its BH4 domain); the interaction disrupts the BAX-BCL4 complex inhibiting the anti-apoptotic activity of BCL2. Interacts with WDR83; the interaction leads to almost complete elimination of HIF-mediated reporter activity. Interacts with ADRB2; the interaction hydroxylates ADRB2 facilitating its ubiquitination by the VHL-E3 ligase complex. Interacts with PAX2; the interaction targets PAX2 for destruction. Interacts with PKM; the interaction hydroxylates PKM in hypoxia. Interacts with LIMD1, WTIP and AJUBA. Requires Fe(2+) as cofactor. L-ascorbate serves as cofactor. Post-translationally, ubiquitinated by SIAH1 and/or SIAH2 in response to the unfolded protein response (UPR), leading to its degradation. As to expression, widely expressed at low levels. Expressed at higher levels in adult heart (cardiac myocytes, aortic endothelial cells and coronary artery smooth muscle), lung and placenta, and in fetal spleen, heart and skeletal muscle. Also expressed in pancreas. Localized to pancreatic acini and islet cells.

The protein resides in the nucleus. The protein localises to the cytoplasm. The enzyme catalyses L-prolyl-[protein] + 2-oxoglutarate + O2 = trans-4-hydroxy-L-prolyl-[protein] + succinate + CO2. It catalyses the reaction L-prolyl-[hypoxia-inducible factor alpha subunit] + 2-oxoglutarate + O2 = trans-4-hydroxy-L-prolyl-[hypoxia-inducible factor alpha subunit] + succinate + CO2. With respect to regulation, activated in cardiovascular cells and Hela cells following exposure to hypoxia. Inhibited by polynitrogen compounds probably by chelation to Fe(2+) ions. Prolyl hydroxylase that mediates hydroxylation of proline residues in target proteins, such as PKM, TELO2, ATF4 and HIF1A. Target proteins are preferentially recognized via a LXXLAP motif. Cellular oxygen sensor that catalyzes, under normoxic conditions, the post-translational formation of 4-hydroxyproline in hypoxia-inducible factor (HIF) alpha proteins. Hydroxylates a specific proline found in each of the oxygen-dependent degradation (ODD) domains (N-terminal, NODD, and C-terminal, CODD) of HIF1A. Also hydroxylates HIF2A. Has a preference for the CODD site for both HIF1A and HIF2A. Hydroxylation on the NODD site by EGLN3 appears to require prior hydroxylation on the CODD site. Hydroxylated HIFs are then targeted for proteasomal degradation via the von Hippel-Lindau ubiquitination complex. Under hypoxic conditions, the hydroxylation reaction is attenuated allowing HIFs to escape degradation resulting in their translocation to the nucleus, heterodimerization with HIF1B, and increased expression of hypoxy-inducible genes. ELGN3 is the most important isozyme in limiting physiological activation of HIFs (particularly HIF2A) in hypoxia. Also hydroxylates PKM in hypoxia, limiting glycolysis. Under normoxia, hydroxylates and regulates the stability of ADRB2. Regulator of cardiomyocyte and neuronal apoptosis. In cardiomyocytes, inhibits the anti-apoptotic effect of BCL2 by disrupting the BAX-BCL2 complex. In neurons, has a NGF-induced proapoptotic effect, probably through regulating CASP3 activity. Also essential for hypoxic regulation of neutrophilic inflammation. Plays a crucial role in DNA damage response (DDR) by hydroxylating TELO2, promoting its interaction with ATR which is required for activation of the ATR/CHK1/p53 pathway. Also mediates hydroxylation of ATF4, leading to decreased protein stability of ATF4. The protein is Prolyl hydroxylase EGLN3 of Homo sapiens (Human).